Here is a 409-residue protein sequence, read N- to C-terminus: Argininosuccinate synthase (409 aa).

Residues 10–18 and Ala37 contribute to the ATP site; that span reads AYSGGLDTS. Residues Tyr90 and Ser95 each contribute to the L-citrulline site. Gly120 is an ATP binding site. Thr122, Asn126, and Asp127 together coordinate L-aspartate. Position 126 (Asn126) interacts with L-citrulline. Residues Arg130, Ser182, Ser191, Glu267, and Tyr279 each coordinate L-citrulline.

Belongs to the argininosuccinate synthase family. Type 1 subfamily. In terms of assembly, homotetramer.

Its subcellular location is the cytoplasm. It catalyses the reaction L-citrulline + L-aspartate + ATP = 2-(N(omega)-L-arginino)succinate + AMP + diphosphate + H(+). It functions in the pathway amino-acid biosynthesis; L-arginine biosynthesis; L-arginine from L-ornithine and carbamoyl phosphate: step 2/3. The protein is Argininosuccinate synthase of Azoarcus sp. (strain BH72).